The sequence spans 220 residues: Superoxide dismutase [Fe] (220 aa).

Residues H26, H73, D164, and H168 each contribute to the Fe cation site.

It belongs to the iron/manganese superoxide dismutase family. Homodimer. It depends on Fe cation as a cofactor.

The enzyme catalyses 2 superoxide + 2 H(+) = H2O2 + O2. Its function is as follows. Destroys superoxide anion radicals which are normally produced within the cells and which are toxic to biological systems. The chain is Superoxide dismutase [Fe] (sodB) from Campylobacter jejuni subsp. jejuni serotype O:2 (strain ATCC 700819 / NCTC 11168).